The chain runs to 226 residues: Endonuclease V (226 aa).

Residues Asp43 and Asp111 each coordinate Mg(2+).

This sequence belongs to the endonuclease V family. Mg(2+) is required as a cofactor.

The protein localises to the cytoplasm. It carries out the reaction Endonucleolytic cleavage at apurinic or apyrimidinic sites to products with a 5'-phosphate.. DNA repair enzyme involved in the repair of deaminated bases. Selectively cleaves double-stranded DNA at the second phosphodiester bond 3' to a deoxyinosine leaving behind the intact lesion on the nicked DNA. This Nocardia farcinica (strain IFM 10152) protein is Endonuclease V.